The chain runs to 265 residues: Ribonuclease 3 (265 aa).

The RNase III domain maps to 34-157; it reads LAVLTRKLGY…LIGAIYLDSQ (124 aa). Glu70 is a binding site for Mg(2+). Asp74 is an active-site residue. Positions 143 and 146 each coordinate Mg(2+). The active site involves Glu146. The 72-residue stretch at 185–256 folds into the DRBM domain; the sequence is DAKSRLQEWL…AELMINQLHK (72 aa).

This sequence belongs to the ribonuclease III family. Homodimer. The cofactor is Mg(2+).

It is found in the cytoplasm. It catalyses the reaction Endonucleolytic cleavage to 5'-phosphomonoester.. Its function is as follows. Digests double-stranded RNA. Involved in the processing of primary rRNA transcript to yield the immediate precursors to the large and small rRNAs (23S and 16S). Processes some mRNAs, and tRNAs when they are encoded in the rRNA operon. Processes pre-crRNA and tracrRNA of type II CRISPR loci if present in the organism. This is Ribonuclease 3 from Psychrobacter arcticus (strain DSM 17307 / VKM B-2377 / 273-4).